A 63-amino-acid polypeptide reads, in one-letter code: Large ribosomal subunit protein bL28 (63 aa).

The protein belongs to the bacterial ribosomal protein bL28 family.

This chain is Large ribosomal subunit protein bL28, found in Clostridium novyi (strain NT).